The following is a 432-amino-acid chain: MGNNVVVLGTQWGDEGKGKIVDLLTERAKYVVRYQGGHNAGHTLVINGEKTVLHLIPSGILRENVTSIIGNGVVLSPAALMKEMKGLEDRGIPVRERLLLSEACPLILDYHVALDVAREKARGAKAIGTTGRGIGPAYEDKVARRGLRVGDLFDKATFADKLKEVMEYHNFQLVNFYKAEAVDYQKVLDDVMAIADILTGMVVDVSDLLDQARKRGDFVMFEGAQGTLLDIDHGTYPYVTSSNTTAGGVATGSGLGPRYVDYVLGIIKAYSTRVGAGPFPTELFDETGEFLCKQGNEFGATTGRRRRTGWLDAVAVRRAVQINSLSGFCLTKLDVLDGLKEVKICVGYRMPDGREVTTTPLAADNWEGIEPIYETMPGWSETTFGVKERSGLPQAALNYIQRIEELTGVPVDIISTGPDRTETMILRDPFDA.

GTP contacts are provided by residues Gly13–Lys19 and Gly41–Thr43. Asp14 (proton acceptor) is an active-site residue. Asp14 and Gly41 together coordinate Mg(2+). IMP is bound by residues Asp14–Lys17, Asn39–His42, Thr130, Arg144, Gln225, Thr240, and Arg304. His42 serves as the catalytic Proton donor. Ala300–Arg306 contacts substrate. GTP is bound by residues Arg306, Lys332–Asp334, and Ser415–Gly417.

The protein belongs to the adenylosuccinate synthetase family. Homodimer. Mg(2+) serves as cofactor.

Its subcellular location is the cytoplasm. The enzyme catalyses IMP + L-aspartate + GTP = N(6)-(1,2-dicarboxyethyl)-AMP + GDP + phosphate + 2 H(+). It participates in purine metabolism; AMP biosynthesis via de novo pathway; AMP from IMP: step 1/2. In terms of biological role, plays an important role in the de novo pathway of purine nucleotide biosynthesis. Catalyzes the first committed step in the biosynthesis of AMP from IMP. The protein is Adenylosuccinate synthetase of Klebsiella pneumoniae (strain 342).